Reading from the N-terminus, the 479-residue chain is Glucagon receptor (479 aa).

Positions 1 to 25 are cleaved as a signal peptide; that stretch reads MPPARLRHPHLLLLLLLACQPQAPA. Residues 26–136 are Extracellular-facing; it reads AQAMDFLFQK…ELGVQREVAE (111 aa). Disulfide bonds link Cys43-Cys67, Cys58-Cys100, and Cys81-Cys121. N-linked (GlcNAc...) asparagine glycans are attached at residues Asn46, Asn59, Asn74, Asn78, and Asn117. The chain crosses the membrane as a helical span at residues 137-161; it reads MYSSFQAMYTAGYSLSLAALLLALA. Topologically, residues 162 to 173 are cytoplasmic; sequence ILLGLSKLHCTR. A helical transmembrane segment spans residues 174–198; that stretch reads NYIHANLLASFVLRASSVLALDALL. The Extracellular segment spans residues 199–225; it reads KTRYSQRLGDDLSVSIWLSDEAVAGCR. Cysteines 224 and 294 form a disulfide. Residues 226-249 traverse the membrane as a helical segment; the sequence is VAAVFMQYGVVANYCWLLVEGVYL. Residues 250–263 lie on the Cytoplasmic side of the membrane; sequence HSLLRQATIPERSC. A helical membrane pass occupies residues 264 to 285; the sequence is FPLYLAIGWGAPMLFVIPWAVV. The Extracellular portion of the chain corresponds to 286–303; sequence KCLFENIQCWTSNDNMGF. The helical transmembrane segment at 304–326 threads the bilayer; it reads WWILRFPVFLAILINFSIFIRVL. The Cytoplasmic segment spans residues 327 to 350; sequence HVLVAKLRAHQMRCTDYKFRLARS. Residues 351 to 369 form a helical membrane-spanning segment; it reads TLTLIPLLGVHEVVFAFVT. The Extracellular portion of the chain corresponds to 370 to 381; it reads DEHAQGALRSAK. The chain crosses the membrane as a helical span at residues 382–402; sequence LFFDLFLSSFQGLLVAVLYCF. Topologically, residues 403 to 479 are cytoplasmic; it reads LNKEVQAELL…GLPGVAENPF (77 aa). A disordered region spans residues 426–479; the sequence is KAHRVGSHSARPPSGPPSEKLLLSTGGSSNGTSQEPSAETHLASGLPGVAENPF. A compositionally biased stretch (low complexity) spans 446–458; that stretch reads LLLSTGGSSNGTS. Phosphoserine is present on Ser458.

This sequence belongs to the G-protein coupled receptor 2 family. Ligand-binding promotes phosphorylation of serine residues in the C-terminal cytoplasmic domain. Phosphorylation is important for receptor endocytosis after ligand-binding.

The protein localises to the cell membrane. G-protein coupled receptor for glucagon that plays a central role in the regulation of blood glucose levels and glucose homeostasis. Regulates the rate of hepatic glucose production by promoting glycogen hydrolysis and gluconeogenesis. Plays an important role in mediating the responses to fasting. Ligand binding causes a conformation change that triggers signaling via guanine nucleotide-binding proteins (G proteins) and modulates the activity of down-stream effectors, such as adenylate cyclase. Promotes activation of adenylate cyclase. Besides, plays a role in signaling via a phosphatidylinositol-calcium second messenger system. The chain is Glucagon receptor from Sus scrofa (Pig).